We begin with the raw amino-acid sequence, 498 residues long: Ribose import ATP-binding protein RbsA (498 aa).

ABC transporter domains lie at 2-237 (LALQ…VGRD) and 247-491 (VTPG…TGQQ). 34 to 41 (GENGAGKS) lines the ATP pocket.

It belongs to the ABC transporter superfamily. Ribose importer (TC 3.A.1.2.1) family. As to quaternary structure, the complex is composed of an ATP-binding protein (RbsA), two transmembrane proteins (RbsC) and a solute-binding protein (RbsB).

The protein localises to the cell membrane. The enzyme catalyses D-ribose(out) + ATP + H2O = D-ribose(in) + ADP + phosphate + H(+). Its function is as follows. Part of the ABC transporter complex RbsABC involved in ribose import. Responsible for energy coupling to the transport system. The sequence is that of Ribose import ATP-binding protein RbsA from Deinococcus geothermalis (strain DSM 11300 / CIP 105573 / AG-3a).